The primary structure comprises 354 residues: Protein angel (354 aa).

Residues 22-59 are disordered; the sequence is VSSQAKGASGKRKQKAKEMESSHDRNRRWTSLGNQAEG.

Belongs to the CCR4/nocturin family. Ubiquitously expressed in embryos.

The chain is Protein angel (angel) from Drosophila melanogaster (Fruit fly).